A 160-amino-acid chain; its full sequence is Transcriptional repressor NrdR (160 aa).

The segment at 3 to 34 (CPYCQCEDTQVKDSRPAEEGAVIRRRRVCSVC) is a zinc-finger region. Positions 49 to 139 (LLVLKKSGRR…VYRDFRNASD (91 aa)) constitute an ATP-cone domain.

The protein belongs to the NrdR family. Zn(2+) serves as cofactor.

In terms of biological role, negatively regulates transcription of bacterial ribonucleotide reductase nrd genes and operons by binding to NrdR-boxes. This Bartonella bacilliformis (strain ATCC 35685 / KC583 / Herrer 020/F12,63) protein is Transcriptional repressor NrdR.